A 105-amino-acid chain; its full sequence is Pyrimidine/purine nucleoside phosphorylase (105 aa).

This sequence belongs to the nucleoside phosphorylase PpnP family.

It carries out the reaction a purine D-ribonucleoside + phosphate = a purine nucleobase + alpha-D-ribose 1-phosphate. It catalyses the reaction adenosine + phosphate = alpha-D-ribose 1-phosphate + adenine. The catalysed reaction is cytidine + phosphate = cytosine + alpha-D-ribose 1-phosphate. The enzyme catalyses guanosine + phosphate = alpha-D-ribose 1-phosphate + guanine. It carries out the reaction inosine + phosphate = alpha-D-ribose 1-phosphate + hypoxanthine. It catalyses the reaction thymidine + phosphate = 2-deoxy-alpha-D-ribose 1-phosphate + thymine. The catalysed reaction is uridine + phosphate = alpha-D-ribose 1-phosphate + uracil. The enzyme catalyses xanthosine + phosphate = alpha-D-ribose 1-phosphate + xanthine. Functionally, catalyzes the phosphorolysis of diverse nucleosides, yielding D-ribose 1-phosphate and the respective free bases. Can use uridine, adenosine, guanosine, cytidine, thymidine, inosine and xanthosine as substrates. Also catalyzes the reverse reactions. This chain is Pyrimidine/purine nucleoside phosphorylase, found in Cupriavidus pinatubonensis (strain JMP 134 / LMG 1197) (Cupriavidus necator (strain JMP 134)).